Reading from the N-terminus, the 780-residue chain is Pendrin (780 aa).

Residues 1 to 87 are Cytoplasmic-facing; the sequence is MAAPGGRSEP…YRVKEWLLSD (87 aa). The helical transmembrane segment at 88–108 threads the bilayer; the sequence is VISGVSTGLVATLQGMAYALL. Residue alanine 109 is a topological domain, extracellular. The chain crosses the membrane as a helical span at residues 110-130; that stretch reads AVPVGYGLYSAFFPILTYFIF. Residues 131 to 135 lie on the Cytoplasmic side of the membrane; it reads GTSRH. The chain crosses the membrane as a helical span at residues 136-156; that stretch reads ISVGPFPVVSLMVGSVVLSMA. At 157–191 the chain is on the extracellular side; it reads PDEHFLVSSSNGTVLNTTMIDTAARDTARVLIASA. A helical membrane pass occupies residues 192–212; the sequence is LTLLVGIIQLIFGGLQIGFIV. Over 213–218 the chain is Cytoplasmic; sequence RYLADP. A helical transmembrane segment spans residues 219–239; the sequence is LVGGFTTAAAFQVLVSQLKIV. Residues 240-263 are Extracellular-facing; it reads LNVSTKNYNGVLSIIYTLVEIFQN. The chain crosses the membrane as a helical span at residues 264-284; sequence IGDTNLADFTAGLLTIVVCMA. Residues 285–295 lie on the Cytoplasmic side of the membrane; the sequence is VKELNDRFRHK. A helical transmembrane segment spans residues 296-316; the sequence is IPVPIPIEVIVTIIATAISYG. Residues 317 to 344 are Extracellular-facing; it reads ANLEKNYNAGIVKSIPRGFLPPELPPVS. A helical transmembrane segment spans residues 345 to 365; that stretch reads LFSEMLAASFSIAVVAYAIAV. Residues 366–384 lie on the Cytoplasmic side of the membrane; that stretch reads SVGKVYATKYDYTIDGNQE. The chain crosses the membrane as a helical span at residues 385-405; sequence FIAFGISNIFSGFFSCFVATT. At 406-421 the chain is on the extracellular side; sequence ALSRTAVQESTGGKTQ. A helical transmembrane segment spans residues 422–442; sequence VAGIISAAIVMIAILALGKLL. At 443 to 448 the chain is on the cytoplasmic side; that stretch reads EPLQKS. The helical transmembrane segment at 449–469 threads the bilayer; it reads VLAAVVIANLKGMFMQLCDIP. The Extracellular portion of the chain corresponds to 470–486; sequence RLWRQNKIDAVIWVFTC. A helical membrane pass occupies residues 487–507; that stretch reads IVSIILGLDLGLLAGLIFGLL. Over 508–780 the chain is Cytoplasmic; that stretch reads TVVLRVQFPS…QDEAMRTLAS (273 aa). Residues 535–729 form the STAS domain; it reads NYKNIEEPQG…LTVHDAILYL (195 aa).

This sequence belongs to the SLC26A/SulP transporter (TC 2.A.53) family. In terms of assembly, interacts with IQGAP1; this interaction enhances the chloride-bicarbonate exchange activity of SLC26A4. Highly expressed in the kidney (at protein level). High expression in adult thyroid, lower expression in adult and fetal kidney and fetal brain. Not expressed in other tissues.

The protein resides in the cell membrane. Its subcellular location is the apical cell membrane. It catalyses the reaction chloride(in) = chloride(out). The enzyme catalyses iodide(out) = iodide(in). The catalysed reaction is hydrogencarbonate(in) + chloride(out) = hydrogencarbonate(out) + chloride(in). It carries out the reaction iodide(in) + hydrogencarbonate(out) = iodide(out) + hydrogencarbonate(in). It catalyses the reaction iodide(in) + chloride(out) = iodide(out) + chloride(in). The enzyme catalyses formate(in) + chloride(out) = formate(out) + chloride(in). In terms of biological role, sodium-independent transporter of chloride and iodide. Mediates electroneutral chloride-bicarbonate, chloride-iodide and chloride-formate exchange with 1:1 stoichiometry. Mediates electroneutral iodide-bicarbonate exchange. The chain is Pendrin (SLC26A4) from Homo sapiens (Human).